Consider the following 450-residue polypeptide: UDP-N-acetylmuramoylalanine--D-glutamate ligase (450 aa).

119–125 contacts ATP; sequence GSNGKTT.

This sequence belongs to the MurCDEF family.

It localises to the cytoplasm. It catalyses the reaction UDP-N-acetyl-alpha-D-muramoyl-L-alanine + D-glutamate + ATP = UDP-N-acetyl-alpha-D-muramoyl-L-alanyl-D-glutamate + ADP + phosphate + H(+). It functions in the pathway cell wall biogenesis; peptidoglycan biosynthesis. Cell wall formation. Catalyzes the addition of glutamate to the nucleotide precursor UDP-N-acetylmuramoyl-L-alanine (UMA). This Bacillus cereus (strain G9842) protein is UDP-N-acetylmuramoylalanine--D-glutamate ligase.